The chain runs to 93 residues: Stage III sporulation protein D (93 aa).

Residues 4–75 (YIKERTIKIG…IRHLRGGEAT (72 aa)) form the HTH deoR-type domain. The H-T-H motif DNA-binding region spans 21–40 (KTVRVIAKEFGVSKSTVHKD).

Functionally, this protein regulates the transcription of sigK, which encodes mother cell chamber RNA polymerase sigma-factor (sigma K). This Bacillus subtilis (strain 168) protein is Stage III sporulation protein D (spoIIID).